The following is a 207-amino-acid chain: Large ribosomal subunit protein uL4 (207 aa).

Positions 50–75 (KTKTRSEVAGSGKKPFKQKGTGNARQ) are disordered.

Belongs to the universal ribosomal protein uL4 family. As to quaternary structure, part of the 50S ribosomal subunit.

One of the primary rRNA binding proteins, this protein initially binds near the 5'-end of the 23S rRNA. It is important during the early stages of 50S assembly. It makes multiple contacts with different domains of the 23S rRNA in the assembled 50S subunit and ribosome. Its function is as follows. Forms part of the polypeptide exit tunnel. This chain is Large ribosomal subunit protein uL4, found in Pelobacter propionicus (strain DSM 2379 / NBRC 103807 / OttBd1).